A 299-amino-acid chain; its full sequence is tRNA dimethylallyltransferase (299 aa).

Residue 11–18 coordinates ATP; the sequence is GPTAVGKT. Substrate is bound at residue 13–18; that stretch reads TAVGKT. Residues 36 to 39 form an interaction with substrate tRNA region; sequence DSQQ.

It belongs to the IPP transferase family. Monomer. Mg(2+) serves as cofactor.

The enzyme catalyses adenosine(37) in tRNA + dimethylallyl diphosphate = N(6)-dimethylallyladenosine(37) in tRNA + diphosphate. Its function is as follows. Catalyzes the transfer of a dimethylallyl group onto the adenine at position 37 in tRNAs that read codons beginning with uridine, leading to the formation of N6-(dimethylallyl)adenosine (i(6)A). The protein is tRNA dimethylallyltransferase of Streptococcus pyogenes serotype M28 (strain MGAS6180).